Reading from the N-terminus, the 325-residue chain is GMP reductase (325 aa).

Cys-174 acts as the Thioimidate intermediate in catalysis. 203–226 (IIADGGIRTNGDIAKSIRFGANMV) is an NADP(+) binding site.

Belongs to the IMPDH/GMPR family. GuaC type 2 subfamily.

The catalysed reaction is IMP + NH4(+) + NADP(+) = GMP + NADPH + 2 H(+). In terms of biological role, catalyzes the irreversible NADPH-dependent deamination of GMP to IMP. It functions in the conversion of nucleobase, nucleoside and nucleotide derivatives of G to A nucleotides, and in maintaining the intracellular balance of A and G nucleotides. This chain is GMP reductase, found in Latilactobacillus sakei subsp. sakei (strain 23K) (Lactobacillus sakei subsp. sakei).